The primary structure comprises 459 residues: Argininosuccinate lyase (459 aa).

It belongs to the lyase 1 family. Argininosuccinate lyase subfamily.

It localises to the cytoplasm. The catalysed reaction is 2-(N(omega)-L-arginino)succinate = fumarate + L-arginine. It functions in the pathway amino-acid biosynthesis; L-arginine biosynthesis; L-arginine from L-ornithine and carbamoyl phosphate: step 3/3. The polypeptide is Argininosuccinate lyase (Prochlorococcus marinus (strain MIT 9301)).